A 300-amino-acid polypeptide reads, in one-letter code: UDP-N-acetylenolpyruvoylglucosamine reductase (300 aa).

The 166-residue stretch at 27-192 (KVGGPADYLA…ISAKFALKPG (166 aa)) folds into the FAD-binding PCMH-type domain. The active site involves R171. S221 (proton donor) is an active-site residue. E291 is a catalytic residue.

Belongs to the MurB family. FAD is required as a cofactor.

The protein resides in the cytoplasm. It catalyses the reaction UDP-N-acetyl-alpha-D-muramate + NADP(+) = UDP-N-acetyl-3-O-(1-carboxyvinyl)-alpha-D-glucosamine + NADPH + H(+). The protein operates within cell wall biogenesis; peptidoglycan biosynthesis. In terms of biological role, cell wall formation. The chain is UDP-N-acetylenolpyruvoylglucosamine reductase from Streptococcus agalactiae serotype Ia (strain ATCC 27591 / A909 / CDC SS700).